We begin with the raw amino-acid sequence, 424 residues long: Tyrosine--tRNA ligase (424 aa).

Tyr37 contributes to the L-tyrosine binding site. Positions 42-51 (PTADSLHLGH) match the 'HIGH' region motif. L-tyrosine-binding residues include Tyr175 and Gln179. The 'KMSKS' region motif lies at 235–239 (KFGKT). An ATP-binding site is contributed by Lys238. Positions 357 to 414 (ADLQQALVNAELVPSRGQARTMIGSNAVAINGEKQADPEYVFTDADRLFGRYTLLRRG) constitute an S4 RNA-binding domain.

The protein belongs to the class-I aminoacyl-tRNA synthetase family. TyrS type 1 subfamily. As to quaternary structure, homodimer.

The protein resides in the cytoplasm. It carries out the reaction tRNA(Tyr) + L-tyrosine + ATP = L-tyrosyl-tRNA(Tyr) + AMP + diphosphate + H(+). In terms of biological role, catalyzes the attachment of tyrosine to tRNA(Tyr) in a two-step reaction: tyrosine is first activated by ATP to form Tyr-AMP and then transferred to the acceptor end of tRNA(Tyr). The protein is Tyrosine--tRNA ligase of Yersinia pestis bv. Antiqua (strain Antiqua).